The chain runs to 177 residues: Zinc metalloproteinase-disintegrin-like scutiarin (177 aa).

The 63-residue stretch at 1-63 (NPCCDAATCK…ECPADVFHKN (63 aa)) folds into the Disintegrin domain. 10 disulfide bridges follow: Cys3–Cys26, Cys17–Cys23, Cys22–Cys48, Cys35–Cys55, Cys42–Cys74, Cys67–Cys79, Cys86–Cys136, Cys101–Cys147, Cys114–Cys124, and Cys131–Cys173. Positions 41-43 (ECD) match the D/ECD-tripeptide motif. Ca(2+)-binding residues include Asp43, Pro44, Glu46, Asp58, and Val59.

This sequence belongs to the venom metalloproteinase (M12B) family. P-III subfamily. P-IIIa sub-subfamily. Monomer. It depends on Zn(2+) as a cofactor. Post-translationally, glycosylated. As to expression, expressed by the venom gland.

It localises to the secreted. Functionally, snake venom metalloproteinase that impairs hemostasis in the envenomed animal. The chain is Zinc metalloproteinase-disintegrin-like scutiarin from Crotalus scutulatus scutulatus (Mojave rattlesnake).